The chain runs to 607 residues: Dolichyl-diphosphooligosaccharide--protein glycosyltransferase subunit 1 (607 aa).

A signal peptide spans 1–23 (MEAPAARLFLLLLLGTWAPAPGS). Over 24–434 (ASSEAPPLIN…VVHYTFNKVL (411 aa)) the chain is Lumenal. An N6-acetyllysine modification is found at Lys-187. The N-linked (GlcNAc...) asparagine glycan is linked to Asn-299. A helical transmembrane segment spans residues 435–455 (MLQEPLLVVAAFYILFFTVII). Topologically, residues 456-607 (YVRLDFSITK…TKIDHILDAL (152 aa)) are cytoplasmic. Lys-538 is subject to N6-acetyllysine; alternate. Lys-538 is covalently cross-linked (Glycyl lysine isopeptide (Lys-Gly) (interchain with G-Cter in SUMO2); alternate).

This sequence belongs to the OST1 family. In terms of assembly, component of the oligosaccharyltransferase (OST) complex. OST exists in two different complex forms which contain common core subunits RPN1, RPN2, OST48, OST4, DAD1 and TMEM258, either STT3A or STT3B as catalytic subunits, and form-specific accessory subunits. STT3A complex assembly occurs through the formation of 3 subcomplexes. Subcomplex 1 contains RPN1 and TMEM258, subcomplex 2 contains the STT3A-specific subunits STT3A, DC2/OSTC, and KCP2 as well as the core subunit OST4, and subcomplex 3 contains RPN2, DAD1, and OST48. The STT3A complex can form stable complexes with the Sec61 complex or with both the Sec61 and TRAP complexes. Interacts with TMEM35A/NACHO. In terms of processing, ubiquitinated by the ECS(ASB11) complex. Ufmylated by UFL1 in response to endoplasmic reticulum stress, promoting reticulophagy of endoplasmic reticulum sheets.

The protein resides in the endoplasmic reticulum membrane. The protein operates within protein modification; protein glycosylation. Functionally, subunit of the oligosaccharyl transferase (OST) complex that catalyzes the initial transfer of a defined glycan (Glc(3)Man(9)GlcNAc(2) in eukaryotes) from the lipid carrier dolichol-pyrophosphate to an asparagine residue within an Asn-X-Ser/Thr consensus motif in nascent polypeptide chains, the first step in protein N-glycosylation. N-glycosylation occurs cotranslationally and the complex associates with the Sec61 complex at the channel-forming translocon complex that mediates protein translocation across the endoplasmic reticulum (ER). All subunits are required for a maximal enzyme activity. This Pongo abelii (Sumatran orangutan) protein is Dolichyl-diphosphooligosaccharide--protein glycosyltransferase subunit 1.